The primary structure comprises 98 residues: YcgL domain-containing protein Ping_1076 (98 aa).

In terms of domain architecture, YcgL spans 1–85 (MLCAVYKSIR…PPVNHLQEHK (85 aa)). Residues 75–98 (PPPVNHLQEHKDWKKKRQENKNEI) are disordered.

This chain is YcgL domain-containing protein Ping_1076, found in Psychromonas ingrahamii (strain DSM 17664 / CCUG 51855 / 37).